Consider the following 377-residue polypeptide: Cytoplasmic tRNA 2-thiolation protein 1 (377 aa).

This sequence belongs to the TtcA family. CTU1/NCS6/ATPBD3 subfamily.

It is found in the cytoplasm. The protein operates within tRNA modification; 5-methoxycarbonylmethyl-2-thiouridine-tRNA biosynthesis. In terms of biological role, plays a central role in 2-thiolation of mcm(5)S(2)U at tRNA wobble positions of tRNA(Lys), tRNA(Glu) and tRNA(Gln). Directly binds tRNAs and probably acts by catalyzing adenylation of tRNAs, an intermediate required for 2-thiolation. It is unclear whether it acts as a sulfurtransferase that transfers sulfur from thiocarboxylated URM1 onto the uridine of tRNAs at wobble position. Prior mcm(5) tRNA modification by the elongator complex is required for 2-thiolation. May also be involved in protein urmylation. The polypeptide is Cytoplasmic tRNA 2-thiolation protein 1 (Debaryomyces hansenii (strain ATCC 36239 / CBS 767 / BCRC 21394 / JCM 1990 / NBRC 0083 / IGC 2968) (Yeast)).